Consider the following 289-residue polypeptide: Ribosomal RNA small subunit methyltransferase A (289 aa).

6 residues coordinate S-adenosyl-L-methionine: Asn28, Leu30, Gly55, Glu77, Asp103, and Asn122.

The protein belongs to the class I-like SAM-binding methyltransferase superfamily. rRNA adenine N(6)-methyltransferase family. RsmA subfamily.

Its subcellular location is the cytoplasm. It catalyses the reaction adenosine(1518)/adenosine(1519) in 16S rRNA + 4 S-adenosyl-L-methionine = N(6)-dimethyladenosine(1518)/N(6)-dimethyladenosine(1519) in 16S rRNA + 4 S-adenosyl-L-homocysteine + 4 H(+). Specifically dimethylates two adjacent adenosines (A1518 and A1519) in the loop of a conserved hairpin near the 3'-end of 16S rRNA in the 30S particle. May play a critical role in biogenesis of 30S subunits. The polypeptide is Ribosomal RNA small subunit methyltransferase A (Jannaschia sp. (strain CCS1)).